A 1788-amino-acid chain; its full sequence is Protein Shroom3 (1788 aa).

Disordered regions lie at residues 1-25, 146-174, 225-263, 321-367, 382-401, 469-488, 498-548, 727-768, 793-821, 876-915, 1011-1067, 1086-1133, 1171-1263, 1303-1324, 1404-1467, and 1507-1538; these read MMQV…STSD, EVNS…HGRL, KAAG…ESSP, GAKS…KQEG, PDIS…PLRL, NIAS…QADH, TVHA…GNKL, EISP…VTPT, TAEQ…APLT, TGRR…SMNS, SRRH…SASN, SFKN…PETK, KRGK…SEAE, DTES…PPSL, VPAP…AKSQ, and ALKE…KRET. 2 stretches are compositionally biased toward polar residues: residues 147–161 and 230–240; these read VNSS…SRQP and HSTNTSSNAAQ. Basic and acidic residues-rich tracts occupy residues 245–259 and 357–366; these read VHGD…ERSP and SVKEREKKQE. Basic and acidic residues predominate over residues 476-488; sequence NKMDERSNRQADH. Residues 708–811 form the ASD1 domain; that stretch reads VKDAQCKVLE…SEPEKMNEVG (104 aa). Positions 793–808 are enriched in basic and acidic residues; that stretch reads TAEQKKRSYSEPEKMN. The span at 893–903 shows a compositional bias: polar residues; that stretch reads QSTYFSGSIMD. A compositionally biased stretch (low complexity) spans 904 to 915; that stretch reads NQSMTSTSSMNS. Polar residues-rich tracts occupy residues 1055–1067, 1100–1124, and 1211–1263; these read EVGN…SASN, ENSS…SISG, and TSAQ…SEAE. Over residues 1313-1323 the composition is skewed to pro residues; the sequence is PPSPPPFPPPS. Positions 1433–1451 are enriched in polar residues; the sequence is SILQSSEGNFNPSDSQSTL. The region spanning 1467–1756 is the ASD2 domain; it reads QELAKEIVTK…QLRCLTESLP (290 aa). Residues 1529 to 1538 show a composition bias toward basic and acidic residues; that stretch reads SEXKEEKRET. Positions 1653–1708 form a coiled coil; the sequence is RLARVENALSSLGEDASAEERKTWNEKKKQLCGQHEDARELKENLDRREKLVMDFL.

Belongs to the shroom family. Interacts with F-actin. Interacts with ROCK1. In terms of tissue distribution, expressed in epithelial cells of the cement gland.

The protein localises to the cell junction. Its subcellular location is the adherens junction. It is found in the cytoplasm. It localises to the cytoskeleton. The protein resides in the apical cell membrane. In terms of biological role, controls cell shape changes in the neuroepithelium during neural tube closure. Induces apical constriction in epithelial cells by promoting the apical accumulation of F-actin and myosin II, and probably by bundling stress fibers. Induces apicobasal cell elongation by redistributing gamma-tubulin and directing the assembly of robust apicobasal microtubule arrays. The sequence is that of Protein Shroom3 (shroom3) from Xenopus laevis (African clawed frog).